We begin with the raw amino-acid sequence, 264 residues long: Zinc import ATP-binding protein ZnuC (264 aa).

The ABC transporter domain maps to 11-226; that stretch reads IELKGVNVTF…PVFIRFFGNQ (216 aa). 43–50 provides a ligand contact to ATP; that stretch reads GPNGGGKS.

It belongs to the ABC transporter superfamily. Zinc importer (TC 3.A.1.15.5) family. As to quaternary structure, the complex is composed of two ATP-binding proteins (ZnuC), two transmembrane proteins (ZnuB) and a solute-binding protein (ZnuA).

It localises to the cell inner membrane. It carries out the reaction Zn(2+)(out) + ATP(in) + H2O(in) = Zn(2+)(in) + ADP(in) + phosphate(in) + H(+)(in). Part of the ABC transporter complex ZnuABC involved in zinc import. Responsible for energy coupling to the transport system. In Histophilus somni (strain 129Pt) (Haemophilus somnus), this protein is Zinc import ATP-binding protein ZnuC.